We begin with the raw amino-acid sequence, 198 residues long: Glycerol-3-phosphate acyltransferase (198 aa).

The next 5 helical transmembrane spans lie at 6–26, 55–75, 83–103, 113–133, and 154–174; these read FLPV…GLIL, GLAA…VIIS, AAMI…WLKF, IGIL…VWLA, and IVLW…LTLL.

This sequence belongs to the PlsY family. Probably interacts with PlsX.

It is found in the cell inner membrane. The catalysed reaction is an acyl phosphate + sn-glycerol 3-phosphate = a 1-acyl-sn-glycero-3-phosphate + phosphate. The protein operates within lipid metabolism; phospholipid metabolism. In terms of biological role, catalyzes the transfer of an acyl group from acyl-phosphate (acyl-PO(4)) to glycerol-3-phosphate (G3P) to form lysophosphatidic acid (LPA). This enzyme utilizes acyl-phosphate as fatty acyl donor, but not acyl-CoA or acyl-ACP. This Bradyrhizobium sp. (strain BTAi1 / ATCC BAA-1182) protein is Glycerol-3-phosphate acyltransferase.